Consider the following 70-residue polypeptide: Peptide BmKn2 (70 aa).

The N-terminal stretch at 1 to 23 is a signal peptide; sequence MKSQTFFLLFLVVLLLAISQSEA. At Phe36 the chain carries Phenylalanine amide. The propeptide occupies 40–70; the sequence is SMRDMDTMKYLYDPSLSAADLKTLQKLMENY.

The protein belongs to the non-disulfide-bridged peptide (NDBP) superfamily. Short antimicrobial peptide (group 4) family. In terms of tissue distribution, expressed by the venom gland.

It localises to the secreted. The protein resides in the target cell membrane. In terms of biological role, antimicrobial peptide with potent activity against bacteria. Has strong antibacterial activity against Gram-positive bacteria S.aureus, M.luteus, B.subtilis, and Gram-negative bacteria E.coli, P.aeruginosa and N.gonorrhoeae. Also shows low activity against HIV-1 PV. The protein is Peptide BmKn2 of Olivierus martensii (Manchurian scorpion).